A 241-amino-acid chain; its full sequence is Sugar fermentation stimulation protein homolog (241 aa).

The protein belongs to the SfsA family.

In Nostoc sp. (strain PCC 7120 / SAG 25.82 / UTEX 2576), this protein is Sugar fermentation stimulation protein homolog.